Consider the following 509-residue polypeptide: Dihydrolipoyl dehydrogenase, mitochondrial (509 aa).

Residues 1-35 constitute a mitochondrion transit peptide; the sequence is MQSWSRVYCSLAKRGHFNRISHGLQGLSAVPLRTY. Residue Lys66 is modified to N6-acetyllysine; alternate. Lys66 is modified (N6-succinyllysine; alternate). FAD is bound by residues 71–80 and Lys89; that span reads EKNETLGGTC. Residues Cys80 and Cys85 are joined by a disulfide bond. N6-acetyllysine; alternate is present on residues Lys104, Lys122, Lys132, and Lys143. N6-succinyllysine; alternate is present on residues Lys104, Lys122, Lys132, and Lys143. An FAD-binding site is contributed by Gly154. Lys159 and Lys166 each carry N6-succinyllysine. Residue 183 to 185 coordinates FAD; sequence TGS. NAD(+)-binding positions include 220–227 and Glu243; that span reads GAGVIGVE. N6-succinyllysine is present on residues Lys273 and Lys277. An NAD(+)-binding site is contributed by Val278. 2 positions are modified to phosphoserine: Ser285 and Ser297. Residue Gly314 participates in NAD(+) binding. Lys346 carries the post-translational modification N6-acetyllysine. Residues Asp355 and 361 to 364 contribute to the FAD site; that span reads MLAH. Lys410 is subject to N6-acetyllysine; alternate. Lys410 is subject to N6-succinyllysine; alternate. N6-acetyllysine occurs at positions 417 and 420. Lys430 bears the N6-succinyllysine mark. Residue His487 is the Proton acceptor of the active site. Ser502 carries the post-translational modification Phosphoserine. An N6-acetyllysine; alternate modification is found at Lys505. At Lys505 the chain carries N6-succinyllysine; alternate.

The protein belongs to the class-I pyridine nucleotide-disulfide oxidoreductase family. As to quaternary structure, homodimer. Part of the multimeric pyruvate dehydrogenase complex that contains multiple copies of pyruvate dehydrogenase (subunits PDHA (PDHA1 or PDHA2) and PDHB, E1), dihydrolipoamide acetyltransferase (DLAT, E2) and lipoamide dehydrogenase (DLD, E3). These subunits are bound to an inner core composed of about 48 DLAT and 12 PDHX molecules (by non covalent bonds). The 2-oxoglutarate dehydrogenase complex is composed of OGDH (2-oxoglutarate dehydrogenase; E1), DLST (dihydrolipoamide succinyltransferase; E2), DLD (dihydrolipoamide dehydrogenase; E3) and the assembly factor KGD4. It contains multiple copies of the three enzymatic components (E1, E2 and E3). In the nucleus, the 2-oxoglutarate dehydrogenase complex associates with KAT2A. Interacts with PDHX. FAD is required as a cofactor. Post-translationally, tyrosine phosphorylated.

It localises to the mitochondrion matrix. The protein resides in the nucleus. The protein localises to the cell projection. Its subcellular location is the cilium. It is found in the flagellum. It localises to the cytoplasmic vesicle. The protein resides in the secretory vesicle. The protein localises to the acrosome. The catalysed reaction is N(6)-[(R)-dihydrolipoyl]-L-lysyl-[protein] + NAD(+) = N(6)-[(R)-lipoyl]-L-lysyl-[protein] + NADH + H(+). Its activity is regulated as follows. Disruption of native heterodimer state inhibits primary dihydrolipoamide dehydrogenase activity and induces serine protease activity. Functionally, lipoamide dehydrogenase is a component of the glycine cleavage system as well as an E3 component of three alpha-ketoacid dehydrogenase complexes (pyruvate-, alpha-ketoglutarate-, and branched-chain amino acid-dehydrogenase complex). The 2-oxoglutarate dehydrogenase complex is mainly active in the mitochondrion. A fraction of the 2-oxoglutarate dehydrogenase complex also localizes in the nucleus and is required for lysine succinylation of histones: associates with KAT2A on chromatin and provides succinyl-CoA to histone succinyltransferase KAT2A. In monomeric form may have additional moonlighting function as serine protease. Involved in the hyperactivation of spermatazoa during capacitation and in the spermatazoal acrosome reaction. The polypeptide is Dihydrolipoyl dehydrogenase, mitochondrial (DLD) (Homo sapiens (Human)).